Reading from the N-terminus, the 226-residue chain is Transmembrane protein 204 (226 aa).

At 1 to 5 (MTVQK) the chain is on the cytoplasmic side. The chain crosses the membrane as a helical span at residues 6–26 (LVATAVLVALVSLILNNAAAF). At 27–103 (TPNWVYQTLE…LQFDMMRACN (77 aa)) the chain is on the extracellular side. The chain crosses the membrane as a helical span at residues 104–124 (LVATAALAVGQITFILGLTGL). The Cytoplasmic portion of the chain corresponds to 125 to 136 (PLMSPESQCWEE). The chain crosses the membrane as a helical span at residues 137 to 157 (AMAAAFQLASFVLVIGLVTFY). Residues 158–170 (RIGPYTNLSWSCY) are Extracellular-facing. An N-linked (GlcNAc...) asparagine glycan is attached at N164. Residues 171-191 (LNIGACLLATLAAAMLIWNIL) form a helical membrane-spanning segment. Residues 192-226 (HRREDCMAPRVIVISRSLTARFRRGLDNDYVESPC) are Cytoplasmic-facing.

It localises to the cell junction. It is found in the adherens junction. Its subcellular location is the cell membrane. Functionally, can influence paracellular permeability. Appears to be involved in cell-cell interactions through adherens. In Rattus norvegicus (Rat), this protein is Transmembrane protein 204 (Tmem204).